The following is a 507-amino-acid chain: Tabersonine/lochnericine 19-hydroxylase (507 aa).

A helical membrane pass occupies residues 8-28 (FFVLLLPFFIGIAFIYKLWNF). N-linked (GlcNAc...) asparagine glycosylation occurs at asparagine 167. Heme is bound at residue cysteine 447.

This sequence belongs to the cytochrome P450 family. Requires heme as cofactor. Confined to roots.

The protein resides in the endoplasmic reticulum membrane. The catalysed reaction is (-)-tabersonine + reduced [NADPH--hemoprotein reductase] + O2 = (-)-(R)-19-hydroxytabersonine + oxidized [NADPH--hemoprotein reductase] + H2O + H(+). It carries out the reaction lochnericine + reduced [NADPH--hemoprotein reductase] + O2 = horhammericine + oxidized [NADPH--hemoprotein reductase] + H2O + H(+). The enzyme catalyses (-)-vincadifformine + reduced [NADPH--hemoprotein reductase] + O2 = (-)-minovincinine + oxidized [NADPH--hemoprotein reductase] + H2O + H(+). The protein operates within alkaloid biosynthesis. Its function is as follows. Component of the monoterpenoid indole alkaloids (MIAs, e.g. echitovenine, tabersonine, lochnericine, 19-hydroxytabersonine and horhammericine) biosynthetic pathway; MIAs are used in cancer treatment and other medical applications. Cytochrome P450 catalyzing the conversion of (-)-tabersonine to 19-hydroxytabersonine, of lochnericine to horhammericine and of (-)-vincadifformine to (-)-minovincinine. In Catharanthus roseus (Madagascar periwinkle), this protein is Tabersonine/lochnericine 19-hydroxylase.